The primary structure comprises 315 residues: Annexin Gh1 (315 aa).

Annexin repeat units lie at residues 10 to 81, 82 to 153, 165 to 236, and 240 to 311; these read PSVS…LWAL, DPAE…PLVS, TLAK…STVK, and YPEK…VLAG. Ca(2+) contacts are provided by Phe-23, Gly-25, Gly-27, and Glu-67. Ca(2+) contacts are provided by Ile-253, Arg-255, Gly-257, Val-295, Asp-297, Thr-298, and Glu-303.

Belongs to the annexin family. As to quaternary structure, monomer. Trimer. Oligomerization is calcium-independent. Disassembly of the oligomers seems to be required for calcium-binding.

The protein localises to the membrane. Binds to phospholipid vesicles in a calcium-dependent manner in vitro. Prefers phosphatidyl-serine containing membranes. May have a role in the membrane cytoskeleton scaffolding or exocytotic processes. May be involved in oxidative stress response. The protein is Annexin Gh1 of Gossypium hirsutum (Upland cotton).